Reading from the N-terminus, the 422-residue chain is Protein UmuC (422 aa).

The UmuC domain occupies 2–188 (FALCDVNAFY…LPVDDVWGIG (187 aa)).

This sequence belongs to the DNA polymerase type-Y family.

Functionally, involved in UV protection and mutation. Poorly processive, error-prone DNA polymerase involved in translesion repair. Essential for induced (or SOS) mutagenesis. Able to replicate DNA across DNA lesions (thymine photodimers and abasic sites, translesion synthesis) in the presence of activated RecA; efficiency is maximal in the presence of the beta sliding-clamp and clamp-loading complex of DNA polymerase III plus single-stranded binding protein (SSB). RecA and to a lesser extent the beta clamp-complex may target Pol V to replication complexes stalled at DNA template lesions. This is Protein UmuC (umuC) from Escherichia coli (strain K12).